Consider the following 289-residue polypeptide: Beta-lactamase Toho-2 (289 aa).

An N-terminal signal peptide occupies residues 1–28 (MVTKRVQRMMSAAAACIPLLLGSPTLYA). The active-site Acyl-ester intermediate is the S73. Residue 235-237 (KTG) participates in substrate binding.

Belongs to the class-A beta-lactamase family.

The catalysed reaction is a beta-lactam + H2O = a substituted beta-amino acid. Inhibited 16-fold better by the beta-lactamase inhibitor tazobactam than by clavulanic acid. In terms of biological role, hydrolyzes beta-lactam antibiotics such as penicillin G, carbenicillin, cephaloridine, cefoxitin, cefotaxime, ceftazidime, and aztreonam. Has especially increased relative hydrolysis rates for cephalothin, cephaloridine, cefotaxime and ceftizoxime. The chain is Beta-lactamase Toho-2 (bla) from Escherichia coli.